A 156-amino-acid polypeptide reads, in one-letter code: MALDKSVIPLPLLVVVLLVLGWAQPSLGGESQAEKFQRQHMDSGSSPSSSSTYCNQMMKLRNMTQGWCKSVNTFVHEPLVDVQNVCFQEKVTCKNGQTNCFKSNSKMHITECRLTNGSKYPNCAYQTSPKERHIIVACEGSPYVPVHFDDSVEDST.

The N-terminal stretch at 1–28 is a signal peptide; it reads MALDKSVIPLPLLVVVLLVLGWAQPSLG. Residues Lys-35 and Arg-38 each contribute to the substrate site. Catalysis depends on His-40, which acts as the Proton acceptor. 4 disulfides stabilise this stretch: Cys-54-Cys-112, Cys-68-Cys-123, Cys-86-Cys-138, and Cys-93-Cys-100. The N-linked (GlcNAc...) asparagine glycan is linked to Asn-62. Residues 69-73, Lys-94, and Arg-113 each bind substrate; that span reads KSVNT. Asn-116 is a glycosylation site (N-linked (GlcNAc...) asparagine). Catalysis depends on His-147, which acts as the Proton donor.

This sequence belongs to the pancreatic ribonuclease family. As to quaternary structure, monomer.

It localises to the secreted. It catalyses the reaction an [RNA] containing cytidine + H2O = an [RNA]-3'-cytidine-3'-phosphate + a 5'-hydroxy-ribonucleotide-3'-[RNA].. The catalysed reaction is an [RNA] containing uridine + H2O = an [RNA]-3'-uridine-3'-phosphate + a 5'-hydroxy-ribonucleotide-3'-[RNA].. Functionally, endonuclease that catalyzes the cleavage of RNA on the 3' side of pyrimidine nucleotides. Compared to RNASE1 it has lost activity towards dsRNA. This Pygathrix nemaeus (Red-shanked douc langur) protein is Ribonuclease 1B pancreatic (RNASE1B).